The primary structure comprises 305 residues: UDP-3-O-acyl-N-acetylglucosamine deacetylase (305 aa).

The Zn(2+) site is built by histidine 78, histidine 237, and aspartate 241. Residue histidine 264 is the Proton donor of the active site.

It belongs to the LpxC family. It depends on Zn(2+) as a cofactor.

The catalysed reaction is a UDP-3-O-[(3R)-3-hydroxyacyl]-N-acetyl-alpha-D-glucosamine + H2O = a UDP-3-O-[(3R)-3-hydroxyacyl]-alpha-D-glucosamine + acetate. It participates in glycolipid biosynthesis; lipid IV(A) biosynthesis; lipid IV(A) from (3R)-3-hydroxytetradecanoyl-[acyl-carrier-protein] and UDP-N-acetyl-alpha-D-glucosamine: step 2/6. Functionally, catalyzes the hydrolysis of UDP-3-O-myristoyl-N-acetylglucosamine to form UDP-3-O-myristoylglucosamine and acetate, the committed step in lipid A biosynthesis. This chain is UDP-3-O-acyl-N-acetylglucosamine deacetylase, found in Burkholderia lata (strain ATCC 17760 / DSM 23089 / LMG 22485 / NCIMB 9086 / R18194 / 383).